The following is a 468-amino-acid chain: Ubiquitin carboxyl-terminal hydrolase 17-like protein B (468 aa).

The disordered stretch occupies residues 1–20 (MVVALSFPEADPAMSPPSAP). The USP domain maps to 51-348 (CGLQNTGNSC…NAYVLFYVQQ (298 aa)). Cys60 functions as the Nucleophile in the catalytic mechanism. The active-site Proton acceptor is the His307. The interval 374–449 (KKSGEKKHNK…GGQNLRNTEG (76 aa)) is disordered. A compositionally biased stretch (basic and acidic residues) spans 394-403 (CENREKRSSK). Positions 422–434 (GQKQENTKLTPQE) are enriched in polar residues.

It belongs to the peptidase C19 family. USP17 subfamily. Ubiquitinated. Detected in brain, heart, liver, lung, kidney, ovary and spleen.

It catalyses the reaction Thiol-dependent hydrolysis of ester, thioester, amide, peptide and isopeptide bonds formed by the C-terminal Gly of ubiquitin (a 76-residue protein attached to proteins as an intracellular targeting signal).. Its activity is regulated as follows. Inhibited by ubiquitin aldehyde. In terms of biological role, deubiquitinating enzyme that removes conjugated ubiquitin from specific proteins to regulate different cellular processes. In Mus musculus (Mouse), this protein is Ubiquitin carboxyl-terminal hydrolase 17-like protein B.